We begin with the raw amino-acid sequence, 276 residues long: Ribosomal RNA small subunit methyltransferase A (276 aa).

S-adenosyl-L-methionine is bound by residues N28, L30, G55, E77, D103, and N124.

Belongs to the class I-like SAM-binding methyltransferase superfamily. rRNA adenine N(6)-methyltransferase family. RsmA subfamily.

The protein localises to the cytoplasm. It catalyses the reaction adenosine(1518)/adenosine(1519) in 16S rRNA + 4 S-adenosyl-L-methionine = N(6)-dimethyladenosine(1518)/N(6)-dimethyladenosine(1519) in 16S rRNA + 4 S-adenosyl-L-homocysteine + 4 H(+). Its function is as follows. Specifically dimethylates two adjacent adenosines (A1518 and A1519) in the loop of a conserved hairpin near the 3'-end of 16S rRNA in the 30S particle. May play a critical role in biogenesis of 30S subunits. The sequence is that of Ribosomal RNA small subunit methyltransferase A from Agrobacterium fabrum (strain C58 / ATCC 33970) (Agrobacterium tumefaciens (strain C58)).